A 206-amino-acid chain; its full sequence is MATQQPTQTDNSAQAQPPQTNPAKPTEISEPGIYVALTHDHLNYQSVIDRVRSPEAGAIVVFAGTTRNNFNSLPVQHLSYTSYAPLALRTMLTICRSILTKHGLKGIAMVHRLGVVPIGEESILIAVSSPHRQAAWRAGEEALEECKAKVEVWKREEFGGEGGGVWRANRDGAVGVKVDEPRIGKGEVDEKEDEGDSGNGGNDRKS.

The segment covering 1 to 23 (MATQQPTQTDNSAQAQPPQTNPA) has biased composition (polar residues). Residues 1–27 (MATQQPTQTDNSAQAQPPQTNPAKPTE) are disordered. Substrate contacts are provided by residues 131 to 132 (HR), Lys-147, and 154 to 156 (KRE). Residues 177 to 188 (KVDEPRIGKGEV) show a composition bias toward basic and acidic residues. The interval 177-206 (KVDEPRIGKGEVDEKEDEGDSGNGGNDRKS) is disordered. The segment covering 197–206 (SGNGGNDRKS) has biased composition (gly residues).

The protein belongs to the MoaE family. MOCS2B subfamily. Heterotetramer; composed of 2 small (MOCS2A) and 2 large (MOCS2B) subunits.

It is found in the cytoplasm. It catalyses the reaction 2 [molybdopterin-synthase sulfur-carrier protein]-C-terminal-Gly-aminoethanethioate + cyclic pyranopterin phosphate + H2O = molybdopterin + 2 [molybdopterin-synthase sulfur-carrier protein]-C-terminal Gly-Gly + 2 H(+). Its pathway is cofactor biosynthesis; molybdopterin biosynthesis. Functionally, catalytic subunit of the molybdopterin synthase complex, a complex that catalyzes the conversion of precursor Z into molybdopterin. Acts by mediating the incorporation of 2 sulfur atoms from thiocarboxylated MOCS2A into precursor Z to generate a dithiolene group. In Neurospora crassa (strain ATCC 24698 / 74-OR23-1A / CBS 708.71 / DSM 1257 / FGSC 987), this protein is Molybdopterin synthase catalytic subunit (nit-8).